The primary structure comprises 865 residues: MAIQKKHGKGRLDKWYKLAKEKGYRARAAFKLIQLNKKYGFLEKSKVLLDLCAAPGSWCQVAAEVMPVSSLIVGVDLAPIKPIPKVITFQSDITTEKCRATIRQHLKTWKADTVLHDGAPNVGTAWVQDSFNQAELTLQAMKLATEFLVEGGTFVTKVFRSKDYNSMLWVFNQLFKKVEATKPPSSRNVSAEIFVVCRGFKAPKRIDPKFLDPRAVFAELADPTPNNEAKVYKPEIKKRKRDGYEEGDYTQYKELPAYEFIQSTDPIAILGSTNRLSLEQSKNGDVALAVLEKLPETTDEIRTCCADLKVLGRKEFKLLLKWRLAVREKLGFPTKKSVKKEEEAAAAVAAAEEVAKIESMDEEMRIQHELEKLKERNSTKKKRERRKENERKQKDIVRMQMHMVAPMDIGVEQAGPEGEDAMFALRAVEKGDVMRRLAKGKMVVASEADAKKDRDSGIGSSGETDDESDEELDRLETELDDMYDQFRERKAASDAKYRAKKARQARNGDGDEEWEGVSDNEKADEISDDSELEEESSGDSDDEDDTAPRKSLLTDLDTTPSDNSGLSKRARAFFNQDIFKELDGDMDEPMDEELRAALAGEDEDADMEDTVSKADSKKTKEKTADKKAAKKAKKAAQKAQQVKDDDSDDESDGGFEVVKSGKEDDWEDEDKRTKDGRLDIDIITAEAMTLAHQLATGQKSSHDVIDDGFNKHAFKDREGLPEWFLDDETKHDKPQKPITKAAAAAIKEKMRAFNARPIKKVREAKGRKKMKAAQRLEKLKKKSDLLVNEEGMTEKEKAESIAKLLRKATKKKPKQAVKVVVAKGANRGIKGRPQGIKGRYKIVDPRMKKEMRALKRVAQKAKKRR.

Residues Gly-56, Trp-58, Asp-76, Asp-92, and Asp-117 each contribute to the S-adenosyl-L-methionine site. The active-site Proton acceptor is the Lys-157. Coiled coils occupy residues 358–400 (ESMD…VRMQ) and 462–492 (GETD…RKAA). 2 disordered regions span residues 370-396 (LEKL…QKDI) and 443-676 (VVAS…TKDG). Residues 386 to 396 (RKENERKQKDI) show a composition bias toward basic and acidic residues. The segment covering 463 to 483 (ETDDESDEELDRLETELDDMY) has biased composition (acidic residues). Positions 484–497 (DQFRERKAASDAKY) are enriched in basic and acidic residues. The span at 526-545 (ISDDSELEEESSGDSDDEDD) shows a compositional bias: acidic residues. Over residues 556–566 (LDTTPSDNSGL) the composition is skewed to polar residues. Over residues 600–609 (GEDEDADMED) the composition is skewed to acidic residues. 2 stretches are compositionally biased toward basic and acidic residues: residues 610–627 (TVSK…ADKK) and 659–676 (KSGK…TKDG). A coiled-coil region spans residues 762–789 (REAKGRKKMKAAQRLEKLKKKSDLLVNE).

Belongs to the class I-like SAM-binding methyltransferase superfamily. RNA methyltransferase RlmE family. SPB1 subfamily. Component of the nucleolar and nucleoplasmic pre-60S ribosomal particle.

Its subcellular location is the nucleus. The protein resides in the nucleolus. The catalysed reaction is a ribonucleotide in rRNA + S-adenosyl-L-methionine = a 2'-O-methylribonucleotide in rRNA + S-adenosyl-L-homocysteine + H(+). In terms of biological role, required for proper assembly of pre-ribosomal particles during the biogenesis of the 60S ribosomal subunit. The polypeptide is AdoMet-dependent rRNA methyltransferase SPB1 (Pyricularia oryzae (strain 70-15 / ATCC MYA-4617 / FGSC 8958) (Rice blast fungus)).